The primary structure comprises 388 residues: 1-deoxy-D-xylulose 5-phosphate reductoisomerase (388 aa).

Residues T10, G11, S12, I13, K37, N38, and N123 each contribute to the NADPH site. K124 lines the 1-deoxy-D-xylulose 5-phosphate pocket. E125 serves as a coordination point for NADPH. A Mn(2+)-binding site is contributed by D149. 4 residues coordinate 1-deoxy-D-xylulose 5-phosphate: S150, E151, S175, and H198. Residue E151 participates in Mn(2+) binding. G204 is a binding site for NADPH. 1-deoxy-D-xylulose 5-phosphate-binding residues include S211, N216, K217, and E220. E220 contributes to the Mn(2+) binding site.

This sequence belongs to the DXR family. It depends on Mg(2+) as a cofactor. Requires Mn(2+) as cofactor.

The catalysed reaction is 2-C-methyl-D-erythritol 4-phosphate + NADP(+) = 1-deoxy-D-xylulose 5-phosphate + NADPH + H(+). Its pathway is isoprenoid biosynthesis; isopentenyl diphosphate biosynthesis via DXP pathway; isopentenyl diphosphate from 1-deoxy-D-xylulose 5-phosphate: step 1/6. In terms of biological role, catalyzes the NADPH-dependent rearrangement and reduction of 1-deoxy-D-xylulose-5-phosphate (DXP) to 2-C-methyl-D-erythritol 4-phosphate (MEP). The polypeptide is 1-deoxy-D-xylulose 5-phosphate reductoisomerase (Pelagibacter ubique (strain HTCC1062)).